The sequence spans 477 residues: Bifunctional protein HldE (477 aa).

The ribokinase stretch occupies residues 1-321 (MKILKSFTPR…EYEASLHKST (321 aa)). Residue 198–201 (NKKE) participates in ATP binding. Residue Asp266 is part of the active site. Positions 348-477 (FTNGCFDILH…IQKIKGDLHV (130 aa)) are cytidylyltransferase.

The protein in the N-terminal section; belongs to the carbohydrate kinase PfkB family. In the C-terminal section; belongs to the cytidylyltransferase family. Homodimer.

It carries out the reaction D-glycero-beta-D-manno-heptose 7-phosphate + ATP = D-glycero-beta-D-manno-heptose 1,7-bisphosphate + ADP + H(+). The catalysed reaction is D-glycero-beta-D-manno-heptose 1-phosphate + ATP + H(+) = ADP-D-glycero-beta-D-manno-heptose + diphosphate. It participates in nucleotide-sugar biosynthesis; ADP-L-glycero-beta-D-manno-heptose biosynthesis; ADP-L-glycero-beta-D-manno-heptose from D-glycero-beta-D-manno-heptose 7-phosphate: step 1/4. It functions in the pathway nucleotide-sugar biosynthesis; ADP-L-glycero-beta-D-manno-heptose biosynthesis; ADP-L-glycero-beta-D-manno-heptose from D-glycero-beta-D-manno-heptose 7-phosphate: step 3/4. Functionally, catalyzes the phosphorylation of D-glycero-D-manno-heptose 7-phosphate at the C-1 position to selectively form D-glycero-beta-D-manno-heptose-1,7-bisphosphate. Catalyzes the ADP transfer from ATP to D-glycero-beta-D-manno-heptose 1-phosphate, yielding ADP-D-glycero-beta-D-manno-heptose. This Sulfurimonas denitrificans (strain ATCC 33889 / DSM 1251) (Thiomicrospira denitrificans (strain ATCC 33889 / DSM 1251)) protein is Bifunctional protein HldE.